The following is a 108-amino-acid chain: UPF0102 protein WS0451 (108 aa).

Belongs to the UPF0102 family.

This is UPF0102 protein WS0451 from Wolinella succinogenes (strain ATCC 29543 / DSM 1740 / CCUG 13145 / JCM 31913 / LMG 7466 / NCTC 11488 / FDC 602W) (Vibrio succinogenes).